A 739-amino-acid chain; its full sequence is Adenosylcobalamin-dependent ribonucleoside-triphosphate reductase (739 aa).

An intrachain disulfide couples Cys119 to Cys419. The segment at 147–158 (SMPFSFLFDELM) is effector region-1. The segment at 168-313 (ARSNISQIPR…ICNLIGKAVV (146 aa)) is effector region-2. Residues Cys408 and Glu410 contribute to the active site. An adenosylcobalamin-binding-1 region spans residues 565-626 (FHYGAYLIQR…NPNFASAGTV (62 aa)). Positions 685 to 724 (LQQAPKEPIDKETYEKRSQEITGNVEEVFSQLNSDVKDLE) are adenosylcobalamin-binding-2.

This sequence belongs to the class II ribonucleoside-triphosphate reductase family. Monomer. It depends on adenosylcob(III)alamin as a cofactor.

It carries out the reaction a 2'-deoxyribonucleoside 5'-triphosphate + [thioredoxin]-disulfide + H2O = a ribonucleoside 5'-triphosphate + [thioredoxin]-dithiol. Allosterically regulated by ATP and dNTP. The protein is Adenosylcobalamin-dependent ribonucleoside-triphosphate reductase (rtpR) of Lactobacillus delbrueckii subsp. bulgaricus (strain ATCC 11842 / DSM 20081 / BCRC 10696 / JCM 1002 / NBRC 13953 / NCIMB 11778 / NCTC 12712 / WDCM 00102 / Lb 14).